Consider the following 448-residue polypeptide: Argininosuccinate synthase (448 aa).

Residues 17–25 and Ala43 contribute to the ATP site; that span reads AFSGGLDTS. Tyr99 is an L-citrulline binding site. Residues Gly129 and Thr131 each contribute to the ATP site. The L-aspartate site is built by Thr131, Asn135, and Asp136. Asn135 lines the L-citrulline pocket. Asp136 contributes to the ATP binding site. 2 residues coordinate L-citrulline: Arg139 and Ser192. Asp194 is a binding site for ATP. Thr201, Glu203, and Glu280 together coordinate L-citrulline.

Belongs to the argininosuccinate synthase family. Type 2 subfamily. As to quaternary structure, homotetramer.

The protein localises to the cytoplasm. The enzyme catalyses L-citrulline + L-aspartate + ATP = 2-(N(omega)-L-arginino)succinate + AMP + diphosphate + H(+). Its pathway is amino-acid biosynthesis; L-arginine biosynthesis; L-arginine from L-ornithine and carbamoyl phosphate: step 2/3. This chain is Argininosuccinate synthase, found in Bradyrhizobium sp. (strain ORS 278).